The following is a 78-amino-acid chain: Acyl carrier protein (78 aa).

Positions 2–77 (STIEERVKKI…AAIDYVKAHQ (76 aa)) constitute a Carrier domain. The residue at position 37 (serine 37) is an O-(pantetheine 4'-phosphoryl)serine.

It belongs to the acyl carrier protein (ACP) family. In terms of processing, 4'-phosphopantetheine is transferred from CoA to a specific serine of apo-ACP by AcpS. This modification is essential for activity because fatty acids are bound in thioester linkage to the sulfhydryl of the prosthetic group.

The protein resides in the cytoplasm. It functions in the pathway lipid metabolism; fatty acid biosynthesis. Its function is as follows. Carrier of the growing fatty acid chain in fatty acid biosynthesis. In Pseudomonas putida (strain ATCC 700007 / DSM 6899 / JCM 31910 / BCRC 17059 / LMG 24140 / F1), this protein is Acyl carrier protein.